The following is a 513-amino-acid chain: Glycine/sarcosine/betaine reductase complex component C subunit beta (513 aa).

As to quaternary structure, heterooctamer of four alpha and four beta subunits. Component of the glycine, sarcosine and betaine reductase complexes, together with proteins A and B.

The enzyme catalyses acetyl phosphate + [thioredoxin]-disulfide + NH4(+) + H2O = [thioredoxin]-dithiol + glycine + phosphate + H(+). It catalyses the reaction acetyl phosphate + methylamine + [thioredoxin]-disulfide + H2O = sarcosine + [thioredoxin]-dithiol + phosphate + H(+). It carries out the reaction acetyl phosphate + trimethylamine + [thioredoxin]-disulfide + H2O = glycine betaine + [thioredoxin]-dithiol + phosphate + H(+). In terms of biological role, in the first step of glycine, betaine and sarcosine reductases, the substrate is bound to component PB via a Schiff base intermediate. Then the PB-activated substrate is nucleophilically attacked by the selenol anion of component PA to transform it to a carboxymethylated selenoether and the respective amine. By action of component PC, acetyl phosphate is formed, leaving component PA in its oxidized state. Finally component PA becomes reduced by the thioredoxin system to start a new catalytic cycle of reductive deamination. This chain is Glycine/sarcosine/betaine reductase complex component C subunit beta (grdC), found in Peptoclostridium acidaminophilum (Eubacterium acidaminophilum).